A 239-amino-acid chain; its full sequence is Geranylgeranylglyceryl phosphate synthase (239 aa).

D18 and S45 together coordinate Mg(2+). Residues 166–172, 197–198, and 219–220 contribute to the sn-glycerol 1-phosphate site; these read YLEAGSG, GG, and GT.

Belongs to the GGGP/HepGP synthase family. Group II subfamily. It depends on Mg(2+) as a cofactor.

It is found in the cytoplasm. It catalyses the reaction sn-glycerol 1-phosphate + (2E,6E,10E)-geranylgeranyl diphosphate = sn-3-O-(geranylgeranyl)glycerol 1-phosphate + diphosphate. Its pathway is membrane lipid metabolism; glycerophospholipid metabolism. In terms of biological role, prenyltransferase that catalyzes the transfer of the geranylgeranyl moiety of geranylgeranyl diphosphate (GGPP) to the C3 hydroxyl of sn-glycerol-1-phosphate (G1P). This reaction is the first ether-bond-formation step in the biosynthesis of archaeal membrane lipids. The chain is Geranylgeranylglyceryl phosphate synthase from Pyrobaculum aerophilum (strain ATCC 51768 / DSM 7523 / JCM 9630 / CIP 104966 / NBRC 100827 / IM2).